Consider the following 225-residue polypeptide: Uracil-DNA glycosylase (225 aa).

The active-site Proton acceptor is aspartate 67.

Belongs to the uracil-DNA glycosylase (UDG) superfamily. UNG family.

The protein localises to the cytoplasm. It carries out the reaction Hydrolyzes single-stranded DNA or mismatched double-stranded DNA and polynucleotides, releasing free uracil.. Functionally, excises uracil residues from the DNA which can arise as a result of misincorporation of dUMP residues by DNA polymerase or due to deamination of cytosine. The sequence is that of Uracil-DNA glycosylase from Coxiella burnetii (strain Dugway 5J108-111).